The following is a 373-amino-acid chain: RNA 3'-terminal phosphate cyclase-like protein (373 aa).

Belongs to the RNA 3'-terminal cyclase family. Type 2 subfamily. In terms of assembly, part of the small subunit (SSU) processome, composed of more than 70 proteins and the RNA chaperone small nucleolar RNA (snoRNA) U3. Interacts with BMS1.

Its subcellular location is the nucleus. It localises to the nucleolus. Its function is as follows. As part of the small subunit (SSU) processome, it plays a role in 40S-ribosomal-subunit biogenesis in the early pre-rRNA processing steps at sites A0, A1 and A2 that are required for proper maturation of the 18S RNA. Activates BMS1 by promoting GDP/GTP exchange. Does not have cyclase activity. This is RNA 3'-terminal phosphate cyclase-like protein from Homo sapiens (Human).